Reading from the N-terminus, the 195-residue chain is MAFVLSLRMALVLVSYCPGGSLGCYLSRRPTLDVRENLRLLDRMNRLSPHSCQQDRKDFGLPQEMVEGDQLQKDQALSVLYEMLQQRFNLFHTEHSCAAWNTTLLEQLRTGLHQQLEDLDTCRGPVMGEKDSELGKMDPIVTVKKYFQGIYDYLQEKGYSDCAWEIVRVEMMRALTSSTTLQKRLKKTGGDLNSP.

The N-terminal stretch at 1 to 23 (MAFVLSLRMALVLVSYCPGGSLG) is a signal peptide. Cystine bridges form between Cys-24-Cys-122 and Cys-52-Cys-162. N-linked (GlcNAc...) asparagine glycosylation occurs at Asn-101.

It belongs to the alpha/beta interferon family. IFN-alphaII subfamily. As to expression, constitutively and exclusively expressed in the mononuclear cells of the extraembryonic trophectoderm.

Its subcellular location is the secreted. Its function is as follows. Paracrine hormone primarily responsible for maternal recognition of pregnancy. Interacts with endometrial receptors, probably type I interferon receptors, and blocks estrogen receptor expression, preventing the estrogen-induced increase in oxytocin receptor expression in the endometrium. This results in the suppression of the pulsatile endometrial release of the luteolytic hormone prostaglandin F2-alpha, hindering the regression of the corpus luteum (luteolysis) and therefore a return to ovarian cyclicity. This, and a possible direct effect of IFN-tau on prostaglandin synthesis, leads in turn to continued ovarian progesterone secretion, which stimulates the secretion by the endometrium of the nutrients required for the growth of the conceptus. In summary, displays particularly high antiviral and antiproliferative potency concurrently with particular weak cytotoxicity, high antiluteolytic activity and immunomodulatory properties. In contrast with other IFNs, IFN-tau is not virally inducible. The chain is Interferon tau (IFNT) from Ovibos moschatus (Muskox).